The chain runs to 570 residues: Structure-specific endonuclease subunit EME1 (570 aa).

Positions 1-12 (MALKKSSPSLDS) are enriched in low complexity. The tract at residues 1 to 42 (MALKKSSPSLDSGDSDSEELPTFAFLKKEPSSTKRRQPEREE) is disordered. Phosphoserine is present on residues Ser12 and Ser15. A compositionally biased stretch (basic and acidic residues) spans 26 to 42 (LKKEPSSTKRRQPEREE). Phosphoserine is present on residues Ser84, Ser85, and Ser87. Residue Lys103 forms a Glycyl lysine isopeptide (Lys-Gly) (interchain with G-Cter in SUMO2) linkage. 2 positions are modified to phosphoserine: Ser111 and Ser117. Residues Lys136 and Lys141 each participate in a glycyl lysine isopeptide (Lys-Gly) (interchain with G-Cter in SUMO2) cross-link. Thr150 carries the phosphothreonine modification. Disordered regions lie at residues 187-233 (KTNS…ERKN) and 372-400 (AQNPPRRGKQGANKQTKKQQQRQPEASIG). Residues 220-233 (RQKESTLRRQERKN) show a composition bias toward basic and acidic residues. Positions 250–456 (KHIIVVLDPV…PFKKLRDETT (207 aa)) are nuclease-like domain; forms the post-nick DNA binding interface and is involved in DNA recognition and bending. Residues 476–570 (RGLALVWRRQ…QPHLSLDSAD (95 aa)) form a helix-hairpin-helix (2HhH); forms the pre-nick DNA binding interface and is involved in DNA recognition and bending region.

It belongs to the EME1/MMS4 family. In terms of assembly, part of the heterodimeric MUS81-EME1 complex.

The protein localises to the nucleus. Its subcellular location is the nucleolus. Non-catalytic subunit of the structure-specific, heterodimeric DNA endonuclease MUS81-EME1 which is involved in the maintenance of genome stability. In the complex, EME1 is required for DNA cleavage, participating in DNA recognition and bending. MUS81-EME1 cleaves 3'-flaps and nicked Holliday junctions, and exhibit limited endonuclease activity with 5' flaps and nicked double-stranded DNAs. Active during prometaphase, MUS81-EME1 resolves mitotic recombination intermediates, including Holliday junctions, which form during homologous recombination. The chain is Structure-specific endonuclease subunit EME1 from Homo sapiens (Human).